We begin with the raw amino-acid sequence, 449 residues long: MGRMFGTDGVRGIANKELTADLAYKLGKAGAFILTEGTHRSKILVGMDTRISGDMLESALVAGILSVGAEAICVGVIPTPAIAYLTRKYNADAGVVISASHNPVEYNGIKFFNKNGYKLSDELEDSIQALIRDDFKDVPVLTGENIGRKIEEDGEAIRDYIDFAKSTIKGDLKGLKVALDCANGASYITSVEAFKELGAEVHVINNKPDGININRNSGSTHPEDLMEYVVKNNCHMGLAFDGDADRCLAIDEKGNLINGDFILAICGKELKKQGRLKKNTIVVTVMSNLGLDIAMKKEEINTIKTKVGDRYVLEEMLKNDYAIGGEQSGHIIFSDYNTTGDGLVTALQLAHIVKESGKTFSELCSIMKELPQVLVNAKVPNDQKDIYLKDEEIKSEIDTITKNLDGSGRVLIRPSGTEPLVRVMLEGENQKEIDKLAHGLAKLIENKVK.

Residue Ser-100 is the Phosphoserine intermediate of the active site. Ser-100, Asp-241, Asp-243, and Asp-245 together coordinate Mg(2+). Position 100 is a phosphoserine (Ser-100).

Belongs to the phosphohexose mutase family. Requires Mg(2+) as cofactor. Activated by phosphorylation.

It carries out the reaction alpha-D-glucosamine 1-phosphate = D-glucosamine 6-phosphate. In terms of biological role, catalyzes the conversion of glucosamine-6-phosphate to glucosamine-1-phosphate. The sequence is that of Phosphoglucosamine mutase from Clostridium botulinum (strain ATCC 19397 / Type A).